A 167-amino-acid chain; its full sequence is Zinc finger CCCH domain-containing protein 3 (167 aa).

The segment at 63-91 (AAAIGVCQHFVRTGTCKFGDSCRYFHPKP) adopts a C3H1-type zinc-finger fold. Positions 89–101 (PKPPPANPGPAPS) are enriched in pro residues. Residues 89–167 (PKPPPANPGP…YPPFPFVDWG (79 aa)) are disordered. Residues 108-120 (MAQQSNIQGSQPN) are compositionally biased toward polar residues. A compositionally biased stretch (pro residues) spans 149 to 167 (SLRPPPEGGYPPFPFVDWG).

This Oryza sativa subsp. japonica (Rice) protein is Zinc finger CCCH domain-containing protein 3.